Consider the following 1373-residue polypeptide: MQGNTCHRMSYHPGRGCPRGRGGHGARPSAPAFRPQNLRLLHPQQPPAQYQYEPPSAPSSSYSNSQAPSFMPPRPDFVPYPPPAAPSAQGPLPPCPVRPPYPNHQMRHPFPVPPCFPPMPPPMPCPNNPPASGAPPGQGTFPFMVPPPSMPHPPPPPVMPQQVNYQYPPGYSHSFPPPGFNSYQNNSSSFPPSANSSSTPHFRHLPPYSLPKAQNERRSPERLKHYDDHRHRDHSHGRGERHRSLERRERGRSPERRRPESRYRSDYDRGRTPPPRHRSYERSRERDRERHRHREARRSPSLERSYKKEYKRSGRSYALPVAPEPAGCTPELPGEMIKTTESWAPPPENVNHRSPSREKKRARWEEEKDRWSDSQGSGKEKNYTSIKEKEAEEVPPEKTEEEEEELLKPVWIRCTHSESYYSSDPMDQVGDSTVVGTSRLRDLYDKFEEELGNRQEKAKAARPPWEPPKTKLDEDLESSSESECETDDDSTCSSSSDSEVFDVIAEIKRKKAHPDRLHDELWYNDPGQMNDGPLCKCSAKARRTGIRHSIYPGEEAIKPCRPMTNNAGRLFHYRITVSPPTNFLTDRPTVIEYDDHEYIFEGFSMFAHAPLTNIPLCKVIRFNIDYTIHFIEEMMPENFCVKGLELFSLFLFRDILELYDWNLKGPLFEDSPPCCPRFHFMPRFVRFLPDGGKEVLSMHQILLYLLRCSKALVPEEEIANMLQWEELEWQKYAEECKGMIVTNPGTKPSSVRIDQLDREQFNPEVITFPIIVHFGIRPAQLSYAGDPQYQKLWKSYVKLRHLLANSPKVKQTDKQKLAQREEALQKIRQKNTMRREVTVELSSQGFWKTGIRSDVCQHAMMLPVLTHHIRYHQCLMHLDKLIGYTFQDRCLLQLAMTHPSHHLNFGMNPDHARNSLSNCGIRQPKYGDRKVHHMHMRKKGINTLINIMSRLGQDDPTPSRINHNERLEFLGDAVVEFLTSVHLYYLFPSLEEGGLATYRTAIVQNQHLAMLAKKLELDRFMLYAHGPDLCRESDLRHAMANCFEALIGAVYLEGSLEEAKQLFGRLLFNDPDLREVWLNYPLHPLQLQEPNTDRQLIETSPVLQKLTEFEEAIGVIFTHVRLLARAFTLRTVGFNHLTLGHNQRMEFLGDSIMQLVATEYLFIHFPDHHEGHLTLLRSSLVNNRTQAKVAEELGMQEYAITNDKTKRPVALRTKTLADLLESFIAALYIDKDLEYVHTFMNVCFFPRLKEFILNQDWNDPKSQLQQCCLTLRTEGKEPDIPLYKTLQTVGPSHARTYTVAVYFKGERIGCGKGPSIQQAEMGAAMDALEKYNFPQMAHQKRFIERKYRQELKEMRWEREHQEREPEEAEDIKK.

Disordered regions lie at residues 1–99, 119–406, and 447–496; these read MQGN…PVRP, MPPP…EEEL, and FEEE…SSSS. The segment covering 47–69 has biased composition (low complexity); the sequence is PAQYQYEPPSAPSSSYSNSQAPS. Pro residues-rich tracts occupy residues 70–99, 119–133, and 144–159; these read FMPP…PVRP, MPPP…PASG, and MVPP…PPVM. 2 stretches are compositionally biased toward low complexity: residues 160–169 and 185–200; these read PQQVNYQYPP and NNSS…SSTP. 3 stretches are compositionally biased toward basic and acidic residues: residues 214 to 271, 278 to 288, and 297 to 312; these read QNER…DRGR, RSYERSRERDR, and RRSP…EYKR. Residues serine 354 and serine 372 each carry the phosphoserine modification. Composition is skewed to basic and acidic residues over residues 363–398 and 447–459; these read RWEE…PPEK and FEEE…EKAK. Residues 389 to 1364 form a necessary for interaction with DGCR8 and pri-miRNA processing activity region; sequence KEAEEVPPEK…RWEREHQERE (976 aa). Positions 474–490 are enriched in acidic residues; the sequence is EDLESSSESECETDDDS. Positions 535, 537, 548, 560, 608, 675, and 679 each coordinate Zn(2+). RNase III domains follow at residues 875-1055 and 1106-1232; these read LMHL…LEGS and LTEF…IDKD. A Mg(2+)-binding site is contributed by glutamate 968. Residue histidine 1025 coordinates Zn(2+). The Mg(2+) site is built by asparagine 1041, glutamate 1044, glutamate 1146, aspartate 1218, and glutamate 1221. A DRBM domain is found at 1259-1333; it reads DPKSQLQQCC…AMDALEKYNF (75 aa).

This sequence belongs to the ribonuclease III family. As to quaternary structure, component of the microprocessor complex, or pri-miRNA processing protein complex, which is composed of DROSHA and DGCR8. The microprocessor complex is a heterotrimer; each of the two DROSHA RNase III domains binds one DGCR8 (via C-terminal region). Interacts with SP1 and SNIP1. Interacts with SRRT/ARS2. Interacts with CPSF3 and ISY1; this interaction is in an RNA dependent manner. Interacts with PUS10; interaction promotes pri-miRNAs processing. Mg(2+) is required as a cofactor. The cofactor is Mn(2+). Degraded by autophagy in response to neuronal activity in motor neurons. In terms of tissue distribution, expressed in motor neurons (at protein level).

Its subcellular location is the nucleus. The protein localises to the nucleolus. The protein resides in the cytoplasm. It catalyses the reaction Endonucleolytic cleavage to 5'-phosphomonoester.. Ribonuclease III double-stranded (ds) RNA-specific endoribonuclease that is involved in the initial step of microRNA (miRNA) biogenesis. Component of the microprocessor complex that is required to process primary miRNA transcripts (pri-miRNAs) to release precursor miRNA (pre-miRNA) in the nucleus. Within the microprocessor complex, DROSHA cleaves the 3' and 5' strands of a stem-loop in pri-miRNAs (processing center 11 bp from the dsRNA-ssRNA junction) to release hairpin-shaped pre-miRNAs that are subsequently cut by the cytoplasmic DICER to generate mature miRNAs. Involved also in pre-rRNA processing. Cleaves double-strand RNA and does not cleave single-strand RNA. Involved in the formation of GW bodies. Plays a role in growth homeostasis in response to autophagy in motor neurons. This chain is Ribonuclease 3 (Drosha), found in Mus musculus (Mouse).